We begin with the raw amino-acid sequence, 388 residues long: Mannitol-1-phosphate 5-dehydrogenase (388 aa).

5–16 serves as a coordination point for NAD(+); it reads AIQFGGGNIGRG. Residue Lys213 is part of the active site.

This sequence belongs to the mannitol dehydrogenase family. In terms of assembly, monomer.

It catalyses the reaction D-mannitol 1-phosphate + NAD(+) = beta-D-fructose 6-phosphate + NADH + H(+). In terms of biological role, catalyzes the NAD(H)-dependent interconversion of D-fructose 6-phosphate and D-mannitol 1-phosphate in the mannitol metabolic pathway. The protein is Mannitol-1-phosphate 5-dehydrogenase (mpdA) of Aspergillus fumigatus (strain CBS 144.89 / FGSC A1163 / CEA10) (Neosartorya fumigata).